The following is a 684-amino-acid chain: Ubinuclein-1 (684 aa).

5 disordered regions span residues 108-137 (YKGN…FIDD), 157-287 (YVNR…LGKS), 311-332 (NVTG…VKSK), 609-631 (MVDR…CNPT), and 660-684 (PQTR…NLPS). The span at 114–137 (SDGEELDGAPDDDEYDTEDSFIDD) shows a compositional bias: acidic residues. Composition is skewed to basic and acidic residues over residues 157–167 (YVNRGKLERME) and 184–199 (SAKP…DKHT). Residues 211–235 (STAPGSWKTQESPLPSGAQDANTSV) are compositionally biased toward polar residues. Residues 238-260 (DDVKHSDRANHQSRNDTSHKSRE) show a composition bias toward basic and acidic residues. 4 stretches are compositionally biased toward polar residues: residues 261 to 284 (TGSS…TSLL), 311 to 321 (NVTGSRQSSQA), 611 to 631 (DRSN…CNPT), and 669 to 684 (QNLN…NLPS).

Belongs to the ubinuclein family. As to quaternary structure, component of the HIRA complex made of UBN1, UBN2, ASF1A, CABIN1 and HIRA. Interacts with HIRA.

The protein localises to the nucleus. It is found in the nucleolus. In terms of biological role, may be required for replication-independent chromatin assembly. This chain is Ubinuclein-1, found in Arabidopsis thaliana (Mouse-ear cress).